The primary structure comprises 175 residues: RNA pyrophosphohydrolase (175 aa).

A Nudix hydrolase domain is found at 6-150 (GFRPNVGIVI…KREVYRRVMK (145 aa)). The short motif at 38–59 (GGVDDGETPEQAMYRELYEEIG) is the Nudix box element.

This sequence belongs to the Nudix hydrolase family. RppH subfamily. A divalent metal cation serves as cofactor.

Functionally, accelerates the degradation of transcripts by removing pyrophosphate from the 5'-end of triphosphorylated RNA, leading to a more labile monophosphorylated state that can stimulate subsequent ribonuclease cleavage. This is RNA pyrophosphohydrolase from Aeromonas hydrophila subsp. hydrophila (strain ATCC 7966 / DSM 30187 / BCRC 13018 / CCUG 14551 / JCM 1027 / KCTC 2358 / NCIMB 9240 / NCTC 8049).